The sequence spans 413 residues: Arginine biosynthesis bifunctional protein ArgJ (413 aa).

Substrate contacts are provided by Thr158, Lys184, Thr195, Glu285, Asn408, and Ser413. The active-site Nucleophile is Thr195.

This sequence belongs to the ArgJ family. As to quaternary structure, heterotetramer of two alpha and two beta chains.

It localises to the cytoplasm. It carries out the reaction N(2)-acetyl-L-ornithine + L-glutamate = N-acetyl-L-glutamate + L-ornithine. It catalyses the reaction L-glutamate + acetyl-CoA = N-acetyl-L-glutamate + CoA + H(+). It participates in amino-acid biosynthesis; L-arginine biosynthesis; L-ornithine and N-acetyl-L-glutamate from L-glutamate and N(2)-acetyl-L-ornithine (cyclic): step 1/1. The protein operates within amino-acid biosynthesis; L-arginine biosynthesis; N(2)-acetyl-L-ornithine from L-glutamate: step 1/4. In terms of biological role, catalyzes two activities which are involved in the cyclic version of arginine biosynthesis: the synthesis of N-acetylglutamate from glutamate and acetyl-CoA as the acetyl donor, and of ornithine by transacetylation between N(2)-acetylornithine and glutamate. In Mesorhizobium japonicum (strain LMG 29417 / CECT 9101 / MAFF 303099) (Mesorhizobium loti (strain MAFF 303099)), this protein is Arginine biosynthesis bifunctional protein ArgJ.